Here is a 52-residue protein sequence, read N- to C-terminus: uncharacterized protein (52 aa).

Positions 1–52 (MSLRPCLTPSSMQYSDIYIPTPTPTHHTHTPTPHPHPHTHTHTHHNPNPTLF) are disordered. The segment covering 35–45 (PHPHTHTHTHH) has biased composition (basic residues).

This is an uncharacterized protein from Saccharomyces cerevisiae (strain ATCC 204508 / S288c) (Baker's yeast).